The sequence spans 395 residues: MQERHLFTSESVSEGHPDKIADQISDAILDALLAQDPDSRVACETSVTTGLVLVFGEISTKAYVDIQKVVRQTIKEIGYTDGQYGFDGDNCAVLVAIDEQSPDIAQGVDDSLETREGDADPLDQIGAGDQGLMFGYAVNETPELMPLPIELSHALMRRIAMLRKQAVLDYLRPDAKAEVTVEYDDNDQPLRVDTVVLSTQHDPDVTLDRIRQDVIEQVIKPTIPADLLDDQTKYFINPTGRFVIGGPQGDAGLTGRKIIVDTYGGAARHGGGAFSGKDATKVDRSASYAARYIAKNIVAAELAQKCEVQIAYAIGVAEPVSVYVNTFGTGTVAEAKLATAVRDLFDLRPAGIIQMLDLKRPIYKQTAAYGHFGRTDIDLPWEHTDKVDALKAACK.

H16 is a binding site for ATP. Mg(2+) is bound at residue D18. E44 is a K(+) binding site. 2 residues coordinate L-methionine: E57 and Q100. The interval 100-110 (QSPDIAQGVDD) is flexible loop. ATP-binding positions include 174–176 (DAK), 241–242 (RF), D250, 256–257 (RK), A273, and K277. L-methionine is bound at residue D250. Residue K281 coordinates L-methionine.

This sequence belongs to the AdoMet synthase family. In terms of assembly, homotetramer; dimer of dimers. Mg(2+) serves as cofactor. It depends on K(+) as a cofactor.

It localises to the cytoplasm. It catalyses the reaction L-methionine + ATP + H2O = S-adenosyl-L-methionine + phosphate + diphosphate. Its pathway is amino-acid biosynthesis; S-adenosyl-L-methionine biosynthesis; S-adenosyl-L-methionine from L-methionine: step 1/1. Functionally, catalyzes the formation of S-adenosylmethionine (AdoMet) from methionine and ATP. The overall synthetic reaction is composed of two sequential steps, AdoMet formation and the subsequent tripolyphosphate hydrolysis which occurs prior to release of AdoMet from the enzyme. This is S-adenosylmethionine synthase from Levilactobacillus brevis (strain ATCC 367 / BCRC 12310 / CIP 105137 / JCM 1170 / LMG 11437 / NCIMB 947 / NCTC 947) (Lactobacillus brevis).